Here is a 321-residue protein sequence, read N- to C-terminus: Lipoyl synthase (321 aa).

[4Fe-4S] cluster is bound by residues Cys-68, Cys-73, Cys-79, Cys-94, Cys-98, Cys-101, and Ser-308. Positions 80–297 constitute a Radical SAM core domain; the sequence is FNHGTATFMI…KQEALAMGFT (218 aa).

The protein belongs to the radical SAM superfamily. Lipoyl synthase family. [4Fe-4S] cluster is required as a cofactor.

It localises to the cytoplasm. The enzyme catalyses [[Fe-S] cluster scaffold protein carrying a second [4Fe-4S](2+) cluster] + N(6)-octanoyl-L-lysyl-[protein] + 2 oxidized [2Fe-2S]-[ferredoxin] + 2 S-adenosyl-L-methionine + 4 H(+) = [[Fe-S] cluster scaffold protein] + N(6)-[(R)-dihydrolipoyl]-L-lysyl-[protein] + 4 Fe(3+) + 2 hydrogen sulfide + 2 5'-deoxyadenosine + 2 L-methionine + 2 reduced [2Fe-2S]-[ferredoxin]. The protein operates within protein modification; protein lipoylation via endogenous pathway; protein N(6)-(lipoyl)lysine from octanoyl-[acyl-carrier-protein]: step 2/2. Functionally, catalyzes the radical-mediated insertion of two sulfur atoms into the C-6 and C-8 positions of the octanoyl moiety bound to the lipoyl domains of lipoate-dependent enzymes, thereby converting the octanoylated domains into lipoylated derivatives. This chain is Lipoyl synthase, found in Sodalis glossinidius (strain morsitans).